Reading from the N-terminus, the 349-residue chain is Small ribosomal subunit biogenesis GTPase RsgA 2 (349 aa).

One can recognise a CP-type G domain in the interval 97 to 252; sequence AEQLIATNVD…IIDTPGMREL (156 aa). GTP is bound by residues 142-145 and 194-202; these read TKAD and GSSGVGKST. Zn(2+) contacts are provided by Cys275, Cys280, His282, and Cys288.

It belongs to the TRAFAC class YlqF/YawG GTPase family. RsgA subfamily. In terms of assembly, monomer. Associates with 30S ribosomal subunit, binds 16S rRNA. Zn(2+) is required as a cofactor.

It is found in the cytoplasm. Functionally, one of several proteins that assist in the late maturation steps of the functional core of the 30S ribosomal subunit. Helps release RbfA from mature subunits. May play a role in the assembly of ribosomal proteins into the subunit. Circularly permuted GTPase that catalyzes slow GTP hydrolysis, GTPase activity is stimulated by the 30S ribosomal subunit. The sequence is that of Small ribosomal subunit biogenesis GTPase RsgA 2 from Vibrio vulnificus (strain CMCP6).